The primary structure comprises 56 residues: Large ribosomal subunit protein bL32 (56 aa).

The tract at residues 1 to 37 is disordered; it reads MAVQQNKKSRSKRGMRRSHDALSTAQLSVDATSGELH. The span at 7-16 shows a compositional bias: basic residues; it reads KKSRSKRGMR. The span at 21-31 shows a compositional bias: polar residues; it reads ALSTAQLSVDA.

It belongs to the bacterial ribosomal protein bL32 family.

This is Large ribosomal subunit protein bL32 from Shewanella loihica (strain ATCC BAA-1088 / PV-4).